The primary structure comprises 447 residues: Elongation factor 1-alpha (447 aa).

In terms of domain architecture, tr-type G spans 5 to 230 (KVHINIVVIG…DNINEPKRPS (226 aa)). A G1 region spans residues 14–21 (GHVDSGKS). Residue 14–21 (GHVDSGKS) participates in GTP binding. Lys55 is modified (N6,N6-dimethyllysine). A G2 region spans residues 70–74 (GITID). N6,N6,N6-trimethyllysine is present on Lys79. Residues 91–94 (DAPG) are G3. Residues 91–95 (DAPGH) and 153–156 (NKMD) contribute to the GTP site. The segment at 153 to 156 (NKMD) is G4. Position 187 is an N6,N6,N6-trimethyllysine (Lys187). Residues 194–196 (SGF) form a G5 region. An N6-methyllysine modification is found at Lys261. Glu289 carries the 5-glutamyl glycerylphosphorylethanolamine modification. Lys306 bears the N6,N6,N6-trimethyllysine mark. Glu362 carries the 5-glutamyl glycerylphosphorylethanolamine modification. Lys396 carries the post-translational modification N6,N6,N6-trimethyllysine.

It belongs to the TRAFAC class translation factor GTPase superfamily. Classic translation factor GTPase family. EF-Tu/EF-1A subfamily.

The protein localises to the cytoplasm. Functionally, this protein promotes the GTP-dependent binding of aminoacyl-tRNA to the A-site of ribosomes during protein biosynthesis. The protein is Elongation factor 1-alpha of Vicia faba (Broad bean).